The chain runs to 349 residues: Peptide chain release factor 1 (349 aa).

At Gln-233 the chain carries N5-methylglutamine.

The protein belongs to the prokaryotic/mitochondrial release factor family. Methylated by PrmC. Methylation increases the termination efficiency of RF1.

It localises to the cytoplasm. In terms of biological role, peptide chain release factor 1 directs the termination of translation in response to the peptide chain termination codons UAG and UAA. The sequence is that of Peptide chain release factor 1 from Pelotomaculum thermopropionicum (strain DSM 13744 / JCM 10971 / SI).